Here is a 200-residue protein sequence, read N- to C-terminus: GMP synthase [glutamine-hydrolyzing] subunit A (200 aa).

The Glutamine amidotransferase type-1 domain occupies Lys-3–Ile-193. The active-site Nucleophile is Cys-80. Active-site residues include His-167 and Glu-169.

In terms of assembly, heterodimer composed of a glutamine amidotransferase subunit (A) and a GMP-binding subunit (B).

The catalysed reaction is XMP + L-glutamine + ATP + H2O = GMP + L-glutamate + AMP + diphosphate + 2 H(+). The protein operates within purine metabolism; GMP biosynthesis; GMP from XMP (L-Gln route): step 1/1. In terms of biological role, catalyzes the synthesis of GMP from XMP. The sequence is that of GMP synthase [glutamine-hydrolyzing] subunit A from Thermoplasma acidophilum (strain ATCC 25905 / DSM 1728 / JCM 9062 / NBRC 15155 / AMRC-C165).